The chain runs to 262 residues: uncharacterized protein (262 aa).

The protein belongs to the AB hydrolase superfamily. AB hydrolase 2 family.

This is an uncharacterized protein from Mycosarcoma maydis (Corn smut fungus).